We begin with the raw amino-acid sequence, 378 residues long: Glutamate 5-kinase (378 aa).

An ATP-binding site is contributed by K19. Substrate-binding residues include S59, D146, and N158. 178–179 contacts ATP; it reads TD. Positions 285 to 363 constitute a PUA domain; the sequence is RGSVTVDPGA…SEFEKLLGYT (79 aa).

This sequence belongs to the glutamate 5-kinase family.

The protein resides in the cytoplasm. It carries out the reaction L-glutamate + ATP = L-glutamyl 5-phosphate + ADP. It functions in the pathway amino-acid biosynthesis; L-proline biosynthesis; L-glutamate 5-semialdehyde from L-glutamate: step 1/2. Catalyzes the transfer of a phosphate group to glutamate to form L-glutamate 5-phosphate. This is Glutamate 5-kinase from Polaromonas naphthalenivorans (strain CJ2).